Reading from the N-terminus, the 130-residue chain is Ribosome-binding factor A (130 aa).

Residues 111-130 form a disordered region; the sequence is RDLDDVGPGATSSDEDAEQR.

Belongs to the RbfA family. In terms of assembly, monomer. Binds 30S ribosomal subunits, but not 50S ribosomal subunits or 70S ribosomes.

It is found in the cytoplasm. One of several proteins that assist in the late maturation steps of the functional core of the 30S ribosomal subunit. Associates with free 30S ribosomal subunits (but not with 30S subunits that are part of 70S ribosomes or polysomes). Required for efficient processing of 16S rRNA. May interact with the 5'-terminal helix region of 16S rRNA. This is Ribosome-binding factor A from Xanthomonas oryzae pv. oryzae (strain MAFF 311018).